The chain runs to 346 residues: N-acetyl-gamma-glutamyl-phosphate reductase (346 aa).

Residue Cys150 is part of the active site.

This sequence belongs to the NAGSA dehydrogenase family. Type 1 subfamily.

It is found in the cytoplasm. It catalyses the reaction N-acetyl-L-glutamate 5-semialdehyde + phosphate + NADP(+) = N-acetyl-L-glutamyl 5-phosphate + NADPH + H(+). The protein operates within amino-acid biosynthesis; L-arginine biosynthesis; N(2)-acetyl-L-ornithine from L-glutamate: step 3/4. Catalyzes the NADPH-dependent reduction of N-acetyl-5-glutamyl phosphate to yield N-acetyl-L-glutamate 5-semialdehyde. This Alkaliphilus metalliredigens (strain QYMF) protein is N-acetyl-gamma-glutamyl-phosphate reductase.